The chain runs to 480 residues: Reticulophagy regulator 1 (480 aa).

Residues 1–10 are compositionally biased toward basic and acidic residues; that stretch reads MASPAPEEHA. Positions 1–41 are disordered; sequence MASPAPEEHATQGCPATEEQEPRPGVPGEEAGPEGAGPQVE. At 1–43 the chain is on the cytoplasmic side; the sequence is MASPAPEEHATQGCPATEEQEPRPGVPGEEAGPEGAGPQVEEA. A helical membrane pass occupies residues 44–64; that stretch reads AGRVAAALTWLLGEPVLWLGW. The Lumenal segment spans residues 65–78; that stretch reads RADELLSWKRPLRS. Positions 67 to 216 are reticulon homology domain; sequence DELLSWKRPL…LLFAFLCPLF (150 aa). Residues 79–99 traverse the membrane as a helical segment; the sequence is LLAFLGANLLFWFLALTPWRV. Residues 100-101 lie on the Cytoplasmic side of the membrane; that stretch reads YH. The helical transmembrane segment at 102 to 122 threads the bilayer; the sequence is LISVMILGRVIMQIIKDMVLS. Topologically, residues 123–191 are lumenal; the sequence is RARGAQLWRS…LVCSVCTFFT (69 aa). Serine 132 carries the phosphoserine modification. The residue at position 134 (serine 134) is a Phosphoserine; by CAMK2B. Serine 136 is modified (phosphoserine). The chain crosses the membrane as a helical span at residues 192-212; the sequence is ILGSYIPGVILSYLLLLFAFL. The Cytoplasmic segment spans residues 213–480; it reads CPLFKCNDIG…GFLSNLLGGH (268 aa). Positions 302–313 are enriched in polar residues; sequence FNLSEGYTPQTD. The tract at residues 302-348 is disordered; the sequence is FNLSEGYTPQTDTSDDLDRPSEEVFSRDLSDFPSLENGAGTNDEDEL. The segment covering 317–331 has biased composition (basic and acidic residues); it reads DLDRPSEEVFSRDLS. An LIR motif motif is present at residues 436 to 441; that stretch reads DDFELL. Residues 450-480 form a disordered region; that stretch reads ESELGLTQDQGAEAQQSKKSSGFLSNLLGGH. Residues 454–473 are compositionally biased toward polar residues; it reads GLTQDQGAEAQQSKKSSGFL.

Belongs to the RETREG family. As to quaternary structure, homooligomer; oligomerization is enhanced following endoplasmic reticulum stress and is mediated by the reticulon homology domain. Interacts with ATG8 family modifier proteins MAP1LC3A, MAP1LC3B, GABARAP, GABARAPL1 and GABARAPL2. Phosphorylation at Ser-134 by CAMK2B enhances oligomerization and membrane scission and reticulophagy activity.

Its subcellular location is the golgi apparatus. It is found in the cis-Golgi network membrane. It localises to the endoplasmic reticulum membrane. Functionally, endoplasmic reticulum (ER)-anchored autophagy regulator which mediates ER delivery into lysosomes through sequestration into autophagosomes. Promotes membrane remodeling and ER scission via its membrane bending capacity and targets the fragments into autophagosomes via interaction with ATG8 family proteins. Active under basal conditions. Required for collagen quality control in a LIR motif-dependent manner. Required for long-term survival of nociceptive and autonomic ganglion neurons. The protein is Reticulophagy regulator 1 of Rattus norvegicus (Rat).